Reading from the N-terminus, the 304-residue chain is MAITASMVAELRAKTDAPMMECKKALTEADGNFEKAEEILRVKLGNKAGKAASRVTAEGVIAYHSEGGIGALVEINCETDFVTKNDSFLAFTKAVAEGIVKNNPADVDAIGAMALSLDGFGPTVEDVRKGLIGKIGENMSVRRFKRFAGSKLASYLHGTRIGVVVEFDGDETAAKDVAMHVAAMKPVSLSSADVPADLVAKERSVAAAKAAEDAAKAQAEGKPVQSAEIVAKRIDGGVQKYLKEVSLYNQSFVKNDKQTVEQMLKERATTVKSFTLYVVGEGIEKKADDFAAEVAAQIAAAKAA.

The tract at residues 79-82 (TDFV) is involved in Mg(2+) ion dislocation from EF-Tu.

This sequence belongs to the EF-Ts family.

It is found in the cytoplasm. Its function is as follows. Associates with the EF-Tu.GDP complex and induces the exchange of GDP to GTP. It remains bound to the aminoacyl-tRNA.EF-Tu.GTP complex up to the GTP hydrolysis stage on the ribosome. This is Elongation factor Ts from Polaromonas sp. (strain JS666 / ATCC BAA-500).